The primary structure comprises 1198 residues: Fibronectin type-III domain-containing protein 3a (1198 aa).

Over residues 189-201 (KLKDRHGTQKDKL) the composition is skewed to basic and acidic residues. The interval 189 to 256 (KLKDRHGTQK…SQTDVEIEEK (68 aa)) is disordered. Residues 229–247 (GISTGSTKSKSVGKGKSNS) show a composition bias toward low complexity. Fibronectin type-III domains follow at residues 269 to 370 (NIAK…TMSC), 374 to 466 (APNL…TSGT), 470 to 563 (TPAS…TCPD), 567 to 661 (APSK…TPAV), 665 to 758 (PCQP…TAPG), 762 to 852 (QCKP…TPAS), 864 to 951 (SEDE…TKPL), 952 to 1045 (PPDP…TPKS), and 1046 to 1151 (VPAA…TEPP). The tract at residues 553 to 574 (SETVDYTTCPDKPGAPSKPSVK) is disordered. The chain crosses the membrane as a helical span at residues 1172–1192 (VCAAVILALFAIFSILIAVII).

The protein belongs to the FNDC3 family.

Its subcellular location is the golgi apparatus membrane. The sequence is that of Fibronectin type-III domain-containing protein 3a (FNDC3A) from Gallus gallus (Chicken).